The chain runs to 120 residues: uncharacterized protein (120 aa).

The RING-type zinc finger occupies Cys-70 to Lys-109.

This is an uncharacterized protein from Orgyia pseudotsugata multicapsid polyhedrosis virus (OpMNPV).